A 338-amino-acid chain; its full sequence is Lipoate-protein ligase A (338 aa).

One can recognise a BPL/LPL catalytic domain in the interval 29–216 (SPDQRVLFLW…AFFAYYDEQV (188 aa)). Residues R71, 76-79 (GAVF), and K134 each bind ATP. Position 134 (K134) interacts with (R)-lipoate.

The protein belongs to the LplA family. As to quaternary structure, monomer.

Its subcellular location is the cytoplasm. The catalysed reaction is L-lysyl-[lipoyl-carrier protein] + (R)-lipoate + ATP = N(6)-[(R)-lipoyl]-L-lysyl-[lipoyl-carrier protein] + AMP + diphosphate + H(+). It participates in protein modification; protein lipoylation via exogenous pathway; protein N(6)-(lipoyl)lysine from lipoate: step 1/2. The protein operates within protein modification; protein lipoylation via exogenous pathway; protein N(6)-(lipoyl)lysine from lipoate: step 2/2. Functionally, catalyzes both the ATP-dependent activation of exogenously supplied lipoate to lipoyl-AMP and the transfer of the activated lipoyl onto the lipoyl domains of lipoate-dependent enzymes. This chain is Lipoate-protein ligase A, found in Yersinia pseudotuberculosis serotype IB (strain PB1/+).